Reading from the N-terminus, the 100-residue chain is NADH-quinone oxidoreductase subunit K (100 aa).

The next 3 membrane-spanning stretches (helical) occupy residues 4 to 24 (LQHG…GLVI), 28 to 48 (LLFM…AFVV), and 60 to 80 (VMYI…LALL).

This sequence belongs to the complex I subunit 4L family. As to quaternary structure, NDH-1 is composed of 13 different subunits. Subunits NuoA, H, J, K, L, M, N constitute the membrane sector of the complex.

It localises to the cell inner membrane. The enzyme catalyses a quinone + NADH + 5 H(+)(in) = a quinol + NAD(+) + 4 H(+)(out). Its function is as follows. NDH-1 shuttles electrons from NADH, via FMN and iron-sulfur (Fe-S) centers, to quinones in the respiratory chain. The immediate electron acceptor for the enzyme in this species is believed to be ubiquinone. Couples the redox reaction to proton translocation (for every two electrons transferred, four hydrogen ions are translocated across the cytoplasmic membrane), and thus conserves the redox energy in a proton gradient. The sequence is that of NADH-quinone oxidoreductase subunit K from Citrobacter koseri (strain ATCC BAA-895 / CDC 4225-83 / SGSC4696).